A 115-amino-acid polypeptide reads, in one-letter code: Selenoprotein K homolog (115 aa).

Residues 29–49 traverse the membrane as a helical segment; the sequence is FIWGILNQITFFFSTLIGGTV. Residues 48 to 115 form a disordered region; sequence TVEPRRRPNN…NSASGSUGPK (68 aa). Residues 58–84 show a composition bias toward gly residues; that stretch reads QGGGRRLAGFDGNGNVTGGSGVGGSGP. Over residues 104 to 115 the composition is skewed to polar residues; that stretch reads ACNSASGSUGPK. A non-standard amino acid (selenocysteine) is located at residue U112.

Belongs to the selenoprotein K family.

It localises to the membrane. The protein is Selenoprotein K homolog (selk) of Dictyostelium discoideum (Social amoeba).